A 2039-amino-acid polypeptide reads, in one-letter code: Calcium-channel protein CCH1 (2039 aa).

2 disordered regions span residues 1–171 and 206–288; these read MQGR…PPRS and PQLK…PQKE. Residues 64-80 show a composition bias toward basic and acidic residues; that stretch reads STEEKKGDEYNGNDKDS. N-linked (GlcNAc...) asparagine glycosylation occurs at Asn98. 2 stretches are compositionally biased toward low complexity: residues 122-132 and 147-164; these read SPSTKSAKSSS and FSSY…SPSS. Residues 209-226 are compositionally biased toward basic and acidic residues; the sequence is KSEKSRPVSDVGEDRGEG. Residues Asn257 and Asn269 are each glycosylated (N-linked (GlcNAc...) asparagine). Positions 271-281 are enriched in basic residues; sequence SRKKPSPKFFH. Residue Ser284 is modified to Phosphoserine. The helical transmembrane segment at 346–366 threads the bilayer; that stretch reads YSLLYNTLLTFYAILLAIRTY. The N-linked (GlcNAc...) asparagine glycan is linked to Asn379. A helical transmembrane segment spans residues 384 to 404; it reads FIFILSACFTGNDIAKIIAFG. A glycan (N-linked (GlcNAc...) asparagine) is linked at Asn559. 3 helical membrane-spanning segments follow: residues 563 to 583, 658 to 678, and 691 to 711; these read MLVY…QGSF, IVNS…TDLM, and LFFI…LIAV. Asn754 and Asn760 each carry an N-linked (GlcNAc...) asparagine glycan. The next 3 helical transmembrane spans lie at 766 to 786, 809 to 829, and 841 to 861; these read LAIY…DIGM, ISIV…PNMW, and FIIS…VLGH. N-linked (GlcNAc...) asparagine glycans are attached at residues Asn882 and Asn900. A run of 2 helical transmembrane segments spans residues 904–924 and 942–962; these read FYFF…EGVI and SFLS…LYAL. N-linked (GlcNAc...) asparagine glycosylation is present at Asn968. A helical membrane pass occupies residues 978 to 998; sequence FFIIWFLLSNSVILNIFIALI. Asn1153 carries an N-linked (GlcNAc...) asparagine glycan. The helical transmembrane segment at 1207 to 1227 threads the bilayer; sequence VFVFIFALATILLIVCSCYVT. The N-linked (GlcNAc...) asparagine glycan is linked to Asn1240. Transmembrane regions (helical) follow at residues 1247-1267 and 1277-1297; these read CAFI…DGFI and PWNF…IAYL. N-linked (GlcNAc...) asparagine glycosylation is present at Asn1302. The next 2 membrane-spanning stretches (helical) occupy residues 1340–1360 and 1408–1428; these read IFEA…WGLS and FASA…VDLL. Asn1433 is a glycosylation site (N-linked (GlcNAc...) asparagine). Helical transmembrane passes span 1452 to 1472, 1529 to 1549, 1554 to 1574, 1596 to 1616, and 1618 to 1638; these read FLVL…VSFI, NFYY…MLLS, PGNL…VFLI, IRLS…HVPA, and HYWF…FIIP. Residue Asn1640 is glycosylated (N-linked (GlcNAc...) asparagine). A helical membrane pass occupies residues 1654–1674; sequence LPPILSLTYTWGVLFLVYAIA. Residues Asn1687 and Asn1732 are each glycosylated (N-linked (GlcNAc...) asparagine). A helical membrane pass occupies residues 1748–1768; it reads LMSWNIISMYIFVNMFVSLII. N-linked (GlcNAc...) asparagine glycans are attached at residues Asn1770 and Asn1785. In terms of domain architecture, EF-hand spans 1787–1822; the sequence is SEIKKYIEAWSKFDTDGTGELELSYLPRIMHSFDGP. The interval 2011–2039 is disordered; it reads PRMNQDSTMEPPEEPIDNNDDSANDLIDR. Residues 2021-2033 show a composition bias toward acidic residues; it reads PPEEPIDNNDDSA.

This sequence belongs to the calcium channel alpha-1 subunit (TC 1.A.1.11) family. Interacts with MID1 to form a Ca(2+) influx channel.

It is found in the cell membrane. Functionally, voltage-gated, high-affinity calcium channel that functions together with MID1 to mediate calcium entry into cells. Required during conditions of environmental stress. The protein is Calcium-channel protein CCH1 (CCH1) of Saccharomyces cerevisiae (strain ATCC 204508 / S288c) (Baker's yeast).